Reading from the N-terminus, the 404-residue chain is Adenosylhomocysteinase (404 aa).

2 residues coordinate substrate: aspartate 114 and glutamate 139. NAD(+) is bound at residue threonine 140–threonine 142. Lysine 169 and aspartate 173 together coordinate substrate. Residues asparagine 174, glycine 203–glycine 208, glutamate 226, asparagine 261, alanine 282–histidine 284, and asparagine 329 contribute to the NAD(+) site.

The protein belongs to the adenosylhomocysteinase family. The cofactor is NAD(+).

Its subcellular location is the cytoplasm. It catalyses the reaction S-adenosyl-L-homocysteine + H2O = L-homocysteine + adenosine. The protein operates within amino-acid biosynthesis; L-homocysteine biosynthesis; L-homocysteine from S-adenosyl-L-homocysteine: step 1/1. Functionally, may play a key role in the regulation of the intracellular concentration of adenosylhomocysteine. In Thermotoga maritima (strain ATCC 43589 / DSM 3109 / JCM 10099 / NBRC 100826 / MSB8), this protein is Adenosylhomocysteinase.